Here is a 279-residue protein sequence, read N- to C-terminus: Urease accessory protein UreD (279 aa).

It belongs to the UreD family. As to quaternary structure, ureD, UreF and UreG form a complex that acts as a GTP-hydrolysis-dependent molecular chaperone, activating the urease apoprotein by helping to assemble the nickel containing metallocenter of UreC. The UreE protein probably delivers the nickel.

The protein localises to the cytoplasm. In terms of biological role, required for maturation of urease via the functional incorporation of the urease nickel metallocenter. This Paracoccus denitrificans (strain Pd 1222) protein is Urease accessory protein UreD.